The primary structure comprises 97 residues: Putative pterin-4-alpha-carbinolamine dehydratase (97 aa).

This sequence belongs to the pterin-4-alpha-carbinolamine dehydratase family.

It catalyses the reaction (4aS,6R)-4a-hydroxy-L-erythro-5,6,7,8-tetrahydrobiopterin = (6R)-L-erythro-6,7-dihydrobiopterin + H2O. The protein is Putative pterin-4-alpha-carbinolamine dehydratase of Cyanothece sp. (strain PCC 7425 / ATCC 29141).